The sequence spans 258 residues: Methanol--corrinoid protein (258 aa).

The region spanning 30–124 is the B12-binding N-terminal domain; sequence AEELYPKDEL…NSGATPKTKG (95 aa). The region spanning 123 to 248 is the B12-binding domain; that stretch reads KGTVVCHVAE…DAIIAGTTDV (126 aa). Residue His136 participates in methylcob(III)alamin binding.

The protein belongs to the methylamine corrinoid protein family. As to quaternary structure, heterotetramer, composed of 2 MtaB and 2 MtaC subunits.

Functionally, harbors a corrinoid prosthetic group and acts as a methyl group carrier in methanogenesis in the methanol pathway. The methyl group of methanol is first transferred to the corrinoid prosthetic group of MtaC in the cob(I)amide oxidation state. This reaction is mediated by MtaB. The methyl group from MtaC is then transferred to coenzyme M by MtaA. This chain is Methanol--corrinoid protein (mtaC), found in Methanosarcina barkeri (strain Fusaro / DSM 804).